The chain runs to 537 residues: CTP synthase (537 aa).

The segment at 1–268 (MGETKYIFVT…DSTILEKMGL (268 aa)) is amidoligase domain. S15 contributes to the CTP binding site. S15 serves as a coordination point for UTP. 16–21 (SLGKGI) contacts ATP. An L-glutamine-binding site is contributed by Y56. D73 is a binding site for ATP. Residues D73 and E143 each coordinate Mg(2+). CTP-binding positions include 150–152 (DIE), 189–194 (KTKPTQ), and K225. UTP contacts are provided by residues 189 to 194 (KTKPTQ) and K225. The 242-residue stretch at 296–537 (NIALVGKYDL…VKAAIENEKN (242 aa)) folds into the Glutamine amidotransferase type-1 domain. L-glutamine is bound at residue G357. Catalysis depends on C384, which acts as the Nucleophile; for glutamine hydrolysis. Residues 385 to 388 (LGMQ), E408, and R465 each bind L-glutamine. Catalysis depends on residues H510 and E512.

This sequence belongs to the CTP synthase family. In terms of assembly, homotetramer.

The enzyme catalyses UTP + L-glutamine + ATP + H2O = CTP + L-glutamate + ADP + phosphate + 2 H(+). It carries out the reaction L-glutamine + H2O = L-glutamate + NH4(+). It catalyses the reaction UTP + NH4(+) + ATP = CTP + ADP + phosphate + 2 H(+). It functions in the pathway pyrimidine metabolism; CTP biosynthesis via de novo pathway; CTP from UDP: step 2/2. With respect to regulation, allosterically activated by GTP, when glutamine is the substrate; GTP has no effect on the reaction when ammonia is the substrate. The allosteric effector GTP functions by stabilizing the protein conformation that binds the tetrahedral intermediate(s) formed during glutamine hydrolysis. Inhibited by the product CTP, via allosteric rather than competitive inhibition. Functionally, catalyzes the ATP-dependent amination of UTP to CTP with either L-glutamine or ammonia as the source of nitrogen. Regulates intracellular CTP levels through interactions with the four ribonucleotide triphosphates. In Bacteroides thetaiotaomicron (strain ATCC 29148 / DSM 2079 / JCM 5827 / CCUG 10774 / NCTC 10582 / VPI-5482 / E50), this protein is CTP synthase.